The sequence spans 443 residues: MKEIGALQAEYPLVNKLIATEEVFWINPHIEKYERAIKDSPLNEENVKDAEERLKRFAPYIAKVFPETKGTNGIIESPLVKISSMKEALETTYKQPISGELLLKCDSHLPISGSIKARGGIYEVLKYAEQLALQHGMLTEEDDYSILDSDTCREFFAKHSIAVGSTGNLGLSIGIMSANLGFNVTVHMSADAKEWKKDLLRSKGVNVIEYEDDYSKAVEEGRRQADADPSCYFVDDENSHDLFLGYAVAASRLQKQLEELEVVVDKDHPLFVYLPCGVGGGPGGVAFGLKLLYKDNVHCFFAEPTHSPCMLLGLMTGLHDKIAVQDIGIDNVTDADGLAVGRPSGFVGKTMEPFLSGNYTVSDEELYRLLKELADTENIYLEPSALAGMIGPVKVCKEDEYLQKQQLTEKVKKGTHIVWGTGGSMVPKDVMNEYYRKGLELTV.

Position 116 is an N6-(pyridoxal phosphate)lysine (K116).

Belongs to the serine/threonine dehydratase family. DsdA subfamily. It depends on pyridoxal 5'-phosphate as a cofactor.

It carries out the reaction D-serine = pyruvate + NH4(+). The polypeptide is Probable D-serine dehydratase (Bacillus cereus (strain B4264)).